A 610-amino-acid chain; its full sequence is Solute carrier family 2, facilitated glucose transporter member 12 (610 aa).

The Cytoplasmic segment spans residues 1-49 (MDAPEESIRMTSDPQSKIYVQNPDTHIHLEQGPSAKSGNGRALVLCSVS). The helical transmembrane segment at 50-70 (VACLSGLLMGYEMSLISGALL) threads the bilayer. Over 71-84 (QLRDVLTLSCPEQE) the chain is Extracellular. The chain crosses the membrane as a helical span at residues 85-105 (QVVGSLLLGAFLLSLGGGTIL). Residues 106-118 (DHYGRRFTIILTA) lie on the Cytoplasmic side of the membrane. The helical transmembrane segment at 119-139 (LLCVLGTLLSVCVVSFWALVV) threads the bilayer. The Extracellular segment spans residues 140 to 141 (GR). Residues 142–162 (MLVGMSVALSGTASCLYAAEV) form a helical membrane-spanning segment. At 163 to 176 (APAAWRGRCVCVYE) the chain is on the cytoplasmic side. A helical transmembrane segment spans residues 177–197 (LMVVLGMLLGFGLSWAFAGVP). Residues 198–201 (DGWR) lie on the Extracellular side of the membrane. A helical membrane pass occupies residues 202-222 (FTFGGALLPALLQAGVMPLLP). At 223 to 286 (DSPRFLLAQQ…FQSRDNMLQR (64 aa)) the chain is on the cytoplasmic side. A helical transmembrane segment spans residues 287 to 307 (LLVGAALVFLQQATGQPNILA). Topologically, residues 308-325 (YASTVLSSVGFHGNEAAT) are extracellular. Residues 326 to 346 (LASTGFGVVKVGGTIPAIFLV) traverse the membrane as a helical segment. At 347 to 353 (DKVGPKA) the chain is on the cytoplasmic side. A helical transmembrane segment spans residues 354 to 374 (LLCVGVVVMMLSTATLGAITM). Over 375 to 475 (QSRTHVSSLC…LHEVSPSLKW (101 aa)) the chain is Extracellular. N392, N429, and N438 each carry an N-linked (GlcNAc...) asparagine glycan. The chain crosses the membrane as a helical span at residues 476–496 (ISLVSLLVYVAGFSISLGPMV). The Cytoplasmic portion of the chain corresponds to 497–511 (HVVLSAIFPTGIRGK). The helical transmembrane segment at 512–532 (AVSVISAFNWATNLLISMTFL) threads the bilayer. Residues 533-542 (TLTERIGLPT) lie on the Extracellular side of the membrane. A helical transmembrane segment spans residues 543-563 (VIFSYSAMSFLLVVFVIVFVP). Over 564–610 (ETKGRSLEQISKELAMKNHLRGTLLCHRRKHKATAQPSQEEKALATV) the chain is Cytoplasmic.

This sequence belongs to the major facilitator superfamily. Sugar transporter (TC 2.A.1.1) family. Glucose transporter subfamily. In terms of tissue distribution, expressed in the main insulin-sensitive tissues, such as cardiac muscle, skeletal muscle and adipose tissue.

It localises to the cell membrane. Its subcellular location is the endomembrane system. The protein localises to the cytoplasm. It is found in the perinuclear region. The catalysed reaction is D-glucose(out) = D-glucose(in). In terms of biological role, insulin-regulated facilitative glucose transporter. This chain is Solute carrier family 2, facilitated glucose transporter member 12, found in Danio rerio (Zebrafish).